Consider the following 558-residue polypeptide: Atlastin-1 (558 aa).

Residues 1–28 (MAKNRRDRNSWGGFSEKTYEWSSEEEEP) form a disordered region. Positions 1–34 (MAKNRRDRNSWGGFSEKTYEWSSEEEEPVKKAGP) are N-terminal hypervariable region (HVR). The Cytoplasmic segment spans residues 1–449 (MAKNRRDRNS…NIFHAARTPA (449 aa)). Phosphoserine occurs at positions 10, 22, and 23. The 246-residue stretch at 64–309 (DKEVVAVSVA…LIPWLLSPES (246 aa)) folds into the GB1/RHD3-type G domain. Arg77, Lys78, Gly79, Lys80, Ser81, Phe82, Gln148, Arg217, Asp218, Val276, and Asn279 together coordinate GDP. Arg77, Lys78, Gly79, Lys80, Ser81, and Phe82 together coordinate GTP. Residue Ser81 coordinates Mg(2+). Arg217, Asp218, and Val276 together coordinate GTP. A 3HB (three-helix bundle) domain region spans residues 347-438 (MLQATAEANN…YIQYIKHNDS (92 aa)). At Lys395 the chain carries N6-acetyllysine. Positions 418–439 (LQQLETEIDELYIQYIKHNDSK) form a coiled coil. Positions 439–447 (KNIFHAART) are linker. The chain crosses the membrane as a helical span at residues 450–470 (TLFVVIFITYVIAGVTGFIGL). A topological domain (lumenal) is located at residue Asp471. Residues 472-492 (IIASLCNMIMGLTLITLCTWA) traverse the membrane as a helical segment. Residues 493 to 558 (YIRYSGEYRE…STEQSEKKKM (66 aa)) are Cytoplasmic-facing. Residues 521-558 (NEALYKLYSAAATHRHLYHQAFPAPKSESTEQSEKKKM) form an autoinhibitory domain region.

The protein belongs to the TRAFAC class dynamin-like GTPase superfamily. GB1/RHD3 GTPase family. GB1 subfamily. In terms of assembly, monomeric and homodimeric. The homodimer, transiently formed by two molecules on opposing membranes, is the active form mediating ER membrane fusion. Interacts with REEP1, REEP5, RTN3 and RTN4 (via the transmembrane region); these proteins are involved in endoplasmic reticulum tubular network organization. Interacts with ZFYVE27; both proteins are involved in endoplasmic reticulum tubular network organization. Interacts with ARL6IP1; both proteins are involved in endoplasmic reticulum tubular network organization. Interacts with SPAST; the interaction is direct, could recruit SPAST to Golgi membranes. Interacts (via N-terminal region) with MAP4K4 (via CNH regulatory domain). May interact with TMED2. Interacts with CPT1C. In terms of processing, phosphorylated. Phosphorylation, by different kinases, of the N-terminal hypervariable region (HVR) regulates the ATL1-mediated membrane tethering step.

It localises to the endoplasmic reticulum membrane. It is found in the golgi apparatus membrane. The protein localises to the cell projection. Its subcellular location is the axon. It catalyses the reaction GTP + H2O = GDP + phosphate + H(+). Its function is as follows. Atlastin-1 (ATL1) is a membrane-anchored GTPase that mediates the GTP-dependent fusion of endoplasmic reticulum (ER) membranes, maintaining the continuous ER network. It facilitates the formation of three-way junctions where ER tubules intersect. Two atlastin-1 on neighboring ER tubules bind GTP and form loose homodimers through the GB1/RHD3-type G domains and 3HB regions. Upon GTP hydrolysis, the 3HB regions tighten, pulling the membranes together to drive their fusion. After fusion, the homodimer disassembles upon release of inorganic phosphate (Pi). Subsequently, GDP dissociates, resetting the monomers to a conformation ready for a new fusion cycle. May also regulate more or less directly Golgi biogenesis. Indirectly regulates axonal development. In Bos taurus (Bovine), this protein is Atlastin-1.